Here is a 265-residue protein sequence, read N- to C-terminus: Putative N(omega)-hydroxy-L-arginine synthase DcsA (265 aa).

This sequence belongs to the DcsA family. Requires heme as cofactor.

Functionally, involved in the biosynthesis of the antibiotic D-cycloserine (DCS), a cyclic structural analog of D-alanine, used as an antitubercular agent. Could catalyze the production of N(omega)-hydroxy-L-arginine (NHA) from L-arginine. The chain is Putative N(omega)-hydroxy-L-arginine synthase DcsA from Streptomyces lavendulae.